The sequence spans 980 residues: Putative formate dehydrogenase YrhE (980 aa).

The 2Fe-2S ferredoxin-type domain maps to 5–81 (KSISVRVDGT…GMSIDLSGNR (77 aa)). Cys39, Cys50, Cys53, and Cys65 together coordinate [2Fe-2S] cluster. The 4Fe-4S His(Cys)3-ligated-type domain occupies 81–121 (RVKEAQTEAMDRLLENHLLYCTVCDNNNGNCTLHNTAEMMG). Positions 97, 101, 104, 111, 153, 156, 159, 163, 196, 199, 202, 206, 270, 273, 277, and 305 each coordinate [4Fe-4S] cluster. 2 4Fe-4S ferredoxin-type domains span residues 144-171 (PFYRYDPNQCIACGQCVEVCQNLQVNET) and 187-216 (EGVPINESSCVSCGQCVTVCPCNALMEKSM). Residues 258–980 (MRETRTKKTK…NRPGYVHLTD (723 aa)) are formate dehydrogenase. The 57-residue stretch at 263–319 (TKKTKTVCTFCGVGCSFEVWTKGRDILKIQPVSDAPVNAISTCVKGKFGWDFVNSKE) folds into the 4Fe-4S Mo/W bis-MGD-type domain. The disordered stretch occupies residues 944-980 (ETAPLPKTNPRNKKRHPQNGVEAERKWNRPGYVHLTD).

It in the C-terminal section; belongs to the prokaryotic molybdopterin-containing oxidoreductase family. It depends on [2Fe-2S] cluster as a cofactor. The cofactor is [4Fe-4S] cluster. Mo-bis(molybdopterin guanine dinucleotide) serves as cofactor.

The enzyme catalyses formate + NAD(+) = CO2 + NADH. The polypeptide is Putative formate dehydrogenase YrhE (yrhE) (Bacillus subtilis (strain 168)).